Reading from the N-terminus, the 329-residue chain is Ketol-acid reductoisomerase (NADP(+)) (329 aa).

The KARI N-terminal Rossmann domain maps to 2–182 (ARMYYEKDVD…GATRAGVLET (181 aa)). NADP(+) is bound by residues 25–28 (YGSQ), serine 51, serine 53, and 83–86 (DEKQ). Histidine 108 is a catalytic residue. An NADP(+)-binding site is contributed by glycine 134. The 146-residue stretch at 183-328 (TFKEETETDL…RNLRSMMSFL (146 aa)) folds into the KARI C-terminal knotted domain. Mg(2+) contacts are provided by aspartate 191, glutamate 195, glutamate 227, and glutamate 231. Serine 252 contributes to the substrate binding site.

This sequence belongs to the ketol-acid reductoisomerase family. It depends on Mg(2+) as a cofactor.

The catalysed reaction is (2R)-2,3-dihydroxy-3-methylbutanoate + NADP(+) = (2S)-2-acetolactate + NADPH + H(+). It catalyses the reaction (2R,3R)-2,3-dihydroxy-3-methylpentanoate + NADP(+) = (S)-2-ethyl-2-hydroxy-3-oxobutanoate + NADPH + H(+). It functions in the pathway amino-acid biosynthesis; L-isoleucine biosynthesis; L-isoleucine from 2-oxobutanoate: step 2/4. The protein operates within amino-acid biosynthesis; L-valine biosynthesis; L-valine from pyruvate: step 2/4. Involved in the biosynthesis of branched-chain amino acids (BCAA). Catalyzes an alkyl-migration followed by a ketol-acid reduction of (S)-2-acetolactate (S2AL) to yield (R)-2,3-dihydroxy-isovalerate. In the isomerase reaction, S2AL is rearranged via a Mg-dependent methyl migration to produce 3-hydroxy-3-methyl-2-ketobutyrate (HMKB). In the reductase reaction, this 2-ketoacid undergoes a metal-dependent reduction by NADPH to yield (R)-2,3-dihydroxy-isovalerate. This chain is Ketol-acid reductoisomerase (NADP(+)), found in Clostridioides difficile (strain 630) (Peptoclostridium difficile).